A 104-amino-acid polypeptide reads, in one-letter code: Large ribosomal subunit protein uL23 (104 aa).

The protein belongs to the universal ribosomal protein uL23 family. In terms of assembly, part of the 50S ribosomal subunit. Contacts protein L29, and trigger factor when it is bound to the ribosome.

One of the early assembly proteins it binds 23S rRNA. One of the proteins that surrounds the polypeptide exit tunnel on the outside of the ribosome. Forms the main docking site for trigger factor binding to the ribosome. The sequence is that of Large ribosomal subunit protein uL23 from Paraburkholderia phytofirmans (strain DSM 17436 / LMG 22146 / PsJN) (Burkholderia phytofirmans).